A 339-amino-acid chain; its full sequence is Transcription initiation factor IIB (339 aa).

The TFIIB-type zinc finger occupies 39–70; that stretch reads EELICPVCGSKNIIKDYERAEIVCEMCGCVLQ. Zn(2+)-binding residues include C43, C46, C62, and C65. 2 consecutive repeat copies span residues 156–239 and 250–331.

The protein belongs to the TFIIB family.

In terms of biological role, stabilizes TBP binding to an archaeal box-A promoter. Also responsible for recruiting RNA polymerase II to the pre-initiation complex (DNA-TBP-TFIIB). This is Transcription initiation factor IIB from Methanococcus maripaludis (strain C7 / ATCC BAA-1331).